Consider the following 55-residue polypeptide: CKKMVGAYFEGELCADACLKFKGKMCPTARTSPPSRPSSTSLSSRCCSIKSLCKA.

This sequence belongs to the insect eclosion hormone family.

The protein localises to the secreted. Neuropeptide that triggers the performance of ecdysis behaviors at the end of a molt. It triggers adult behavior patterns: larval, pupal and adult ecdysis, and plasticization during the molt. The protein is Eclosion hormone of Romalea microptera (Eastern lubber grasshopper).